The sequence spans 94 residues: Small ribosomal subunit protein uS17 (94 aa).

The segment at M1–Y22 is disordered.

Belongs to the universal ribosomal protein uS17 family. As to quaternary structure, part of the 30S ribosomal subunit.

In terms of biological role, one of the primary rRNA binding proteins, it binds specifically to the 5'-end of 16S ribosomal RNA. This chain is Small ribosomal subunit protein uS17, found in Kineococcus radiotolerans (strain ATCC BAA-149 / DSM 14245 / SRS30216).